The primary structure comprises 90 residues: Small ribosomal subunit protein uS15c (90 aa).

Belongs to the universal ribosomal protein uS15 family. As to quaternary structure, part of the 30S ribosomal subunit.

Its subcellular location is the plastid. The protein resides in the chloroplast. The protein is Small ribosomal subunit protein uS15c (rps15) of Liriodendron tulipifera (Tuliptree).